The following is a 392-amino-acid chain: Quinolinate synthase (392 aa).

The tract at residues 1–23 (MVDLPTTTPPAQPTTGNDEVDAL) is disordered. Positions 57 and 74 each coordinate iminosuccinate. Residue Cys-131 coordinates [4Fe-4S] cluster. Iminosuccinate contacts are provided by residues 163 to 165 (YIN) and Ser-184. [4Fe-4S] cluster is bound at residue Cys-254. Iminosuccinate is bound by residues 280–282 (HPE) and Thr-297. Cys-344 is a [4Fe-4S] cluster binding site.

Belongs to the quinolinate synthase family. Type 3 subfamily. [4Fe-4S] cluster serves as cofactor.

The protein resides in the cytoplasm. It carries out the reaction iminosuccinate + dihydroxyacetone phosphate = quinolinate + phosphate + 2 H2O + H(+). The protein operates within cofactor biosynthesis; NAD(+) biosynthesis; quinolinate from iminoaspartate: step 1/1. Catalyzes the condensation of iminoaspartate with dihydroxyacetone phosphate to form quinolinate. The protein is Quinolinate synthase of Rhodopirellula baltica (strain DSM 10527 / NCIMB 13988 / SH1).